The chain runs to 206 residues: Large ribosomal subunit protein bL25 (206 aa).

The protein belongs to the bacterial ribosomal protein bL25 family. CTC subfamily. As to quaternary structure, part of the 50S ribosomal subunit; part of the 5S rRNA/L5/L18/L25 subcomplex. Contacts the 5S rRNA. Binds to the 5S rRNA independently of L5 and L18.

In terms of biological role, this is one of the proteins that binds to the 5S RNA in the ribosome where it forms part of the central protuberance. The polypeptide is Large ribosomal subunit protein bL25 (Paraburkholderia phytofirmans (strain DSM 17436 / LMG 22146 / PsJN) (Burkholderia phytofirmans)).